Consider the following 686-residue polypeptide: Glycine--tRNA ligase beta subunit (686 aa).

This sequence belongs to the class-II aminoacyl-tRNA synthetase family. Tetramer of two alpha and two beta subunits.

It is found in the cytoplasm. It carries out the reaction tRNA(Gly) + glycine + ATP = glycyl-tRNA(Gly) + AMP + diphosphate. This is Glycine--tRNA ligase beta subunit from Halothermothrix orenii (strain H 168 / OCM 544 / DSM 9562).